The chain runs to 126 residues: Profilin (126 aa).

It belongs to the profilin family. As to quaternary structure, occurs in many kinds of cells as a complex with monomeric actin in a 1:1 ratio.

It is found in the cytoplasm. Its subcellular location is the cytoskeleton. In terms of biological role, binds to actin and affects the structure of the cytoskeleton. At high concentrations, profilin prevents the polymerization of actin, whereas it enhances it at low concentrations. By binding to PIP2, it inhibits the formation of IP3 and DG. The polypeptide is Profilin (PFY1) (Saccharomyces cerevisiae (strain ATCC 204508 / S288c) (Baker's yeast)).